Consider the following 285-residue polypeptide: MRTLHDLPAPAKLNLFLHITGRRPDGYHLLQSVFMLIDWCDTLHIELRPDGGISREDMGAGLPADDLCTRAARALQAATGTRQGAHIVLEKSIPAQAGMGGGSSDAATTLLALNRLWGLGLGRTALERIGLSLGADIPFFLRGRNAWVEGIGETIMPLENVHALPQSRFVVVKPEAGLDTKSIFSSPSLERNSERATISGFAAAHYQFGKNVLQPVAETLCPEVSEAIRWLEHKGLQARMTGSGSAVFAQMTHAIDLFDLPTGWRAKVCDNLRLHPLAGWAADED.

Residue Lys12 is part of the active site. 94-104 provides a ligand contact to ATP; that stretch reads PAQAGMGGGSS. Asp136 is an active-site residue.

Belongs to the GHMP kinase family. IspE subfamily.

It carries out the reaction 4-CDP-2-C-methyl-D-erythritol + ATP = 4-CDP-2-C-methyl-D-erythritol 2-phosphate + ADP + H(+). Its pathway is isoprenoid biosynthesis; isopentenyl diphosphate biosynthesis via DXP pathway; isopentenyl diphosphate from 1-deoxy-D-xylulose 5-phosphate: step 3/6. Its function is as follows. Catalyzes the phosphorylation of the position 2 hydroxy group of 4-diphosphocytidyl-2C-methyl-D-erythritol. The protein is 4-diphosphocytidyl-2-C-methyl-D-erythritol kinase of Paracidovorax citrulli (strain AAC00-1) (Acidovorax citrulli).